A 98-amino-acid chain; its full sequence is Sm-like protein LSM3B (98 aa).

Ser-2 carries the N-acetylserine modification. Residues Glu-11–Thr-96 enclose the Sm domain.

It belongs to the snRNP Sm proteins family. Component of the heptameric LSM1-LSM7 complex that forms a seven-membered ring structure with a donut shape. The LSM subunits are arranged in the order LSM1, LSM2, LSM3, LSM6, LSM5, LSM7 and LSM4. Component of the heptameric LSM2-LSM8 complex that forms a seven-membered ring structure with a donut shape. The LSM subunits are arranged in the order LSM8, LSM2, LSM3, LSM6, LSM5, LSM7 and LSM4. LSM3B subunit interacts only with its two neighboring subunits, LSM2 and LSM6A or LSM6B. In terms of tissue distribution, expressed in roots, leaves, stems, flowers and siliques.

The protein resides in the cytoplasm. The protein localises to the nucleus. Its function is as follows. Component of LSM protein complexes, which are involved in RNA processing. Component of the cytoplasmic LSM1-LSM7 complex which is involved in mRNA degradation by promoting decapping and leading to accurate 5'-3' mRNA decay. The cytoplasmic LSM1-LSM7 complex regulates developmental gene expression by the decapping of specific development-related transcripts. Component of the nuclear LSM2-LSM8 complex which is involved splicing nuclear mRNAs. LSM2-LSM8 binds directly to the U6 small nuclear RNAs (snRNAs) and is essential for accurate splicing of selected development-related mRNAs through the stabilization of the spliceosomal U6 snRNA. Plays a critical role in the regulation of development-related gene expression. This is Sm-like protein LSM3B from Arabidopsis thaliana (Mouse-ear cress).